The following is a 752-amino-acid chain: Catalase-peroxidase 1 (752 aa).

The interval 1-45 is disordered; it reads MPPNTPDASDARPPQADTETHSHSESENPVIESPKPKAHAPLTNQ. A cross-link (tryptophyl-tyrosyl-methioninium (Trp-Tyr) (with M-270)) is located at residues 116–244; sequence WHAAGTYRIF…YGATTMGLIY (129 aa). Residue His117 is the Proton acceptor of the active site. Residues 244–270 constitute a cross-link (tryptophyl-tyrosyl-methioninium (Tyr-Met) (with W-116)); that stretch reads YVNPEGPEGKPDPLAAAHDIRETFGRM. A heme b-binding site is contributed by His285.

Belongs to the peroxidase family. Peroxidase/catalase subfamily. As to quaternary structure, homodimer or homotetramer. Heme b serves as cofactor. Formation of the three residue Trp-Tyr-Met cross-link is important for the catalase, but not the peroxidase activity of the enzyme.

The catalysed reaction is H2O2 + AH2 = A + 2 H2O. It catalyses the reaction 2 H2O2 = O2 + 2 H2O. Its function is as follows. Bifunctional enzyme with both catalase and broad-spectrum peroxidase activity. May play a role in the intracellular survival of mycobacteria. This is Catalase-peroxidase 1 from Mycolicibacterium fortuitum (Mycobacterium fortuitum).